The following is a 61-amino-acid chain: Alpha-conotoxin EIIA (61 aa).

The signal sequence occupies residues 1–16 (MFIVFLLVVLATTVGS). Positions 17–40 (FTLDRVLEGRNAAAIDNALDQRDP) are excised as a propeptide. A Pyrrolidone carboxylic acid modification is found at Gln-43. The residue at position 45 (Pro-45) is a Hydroxyproline. 2 cysteine pairs are disulfide-bonded: Cys-47-Cys-53 and Cys-48-Cys-58. The residue at position 58 (Cys-58) is a Cysteine amide.

The protein belongs to the conotoxin A superfamily. As to expression, expressed by the venom duct.

It is found in the secreted. In terms of biological role, alpha-conotoxins bind to the nicotinic acetylcholine receptors (nAChR) and inhibit them. This peptide potently blocks muscular nicotinic acetylcholine receptor (CHRNA1-CHRNB1-CHRNG-CHRND), and has no effect on neuronal receptors. It is able to totally displace [125I]-Bgtx from the Torpedo receptor with a complete inhibition in the high micromolar range. It produces a biphasic inhibition curve which fits nicely with a two-site model (Ki of 0.46 and 105 nM). This Conus ermineus (Agate cone) protein is Alpha-conotoxin EIIA.